The following is a 145-amino-acid chain: Superoxide dismutase [Mn/Fe] (145 aa).

The Fe(3+) site is built by His-10 and His-64. Mn(2+)-binding residues include His-10 and His-64.

It belongs to the iron/manganese superoxide dismutase family. Mn(2+) serves as cofactor. Fe(3+) is required as a cofactor.

The catalysed reaction is 2 superoxide + 2 H(+) = H2O2 + O2. Functionally, destroys superoxide anion radicals which are normally produced within the cells and which are toxic to biological systems. Catalyzes the dismutation of superoxide anion radicals into O2 and H2O2 by successive reduction and oxidation of the transition metal ion at the active site. The polypeptide is Superoxide dismutase [Mn/Fe] (sodA) (Streptococcus iniae (Streptococcus shiloi)).